Reading from the N-terminus, the 676-residue chain is Head-specific guanylate cyclase (676 aa).

In terms of domain architecture, Guanylate cyclase spans 466–593 (TILFSDIVGF…HSVTIANKFE (128 aa)).

This sequence belongs to the adenylyl cyclase class-4/guanylyl cyclase family. As to quaternary structure, heterodimer. In terms of tissue distribution, head, where it is preferentially expressed in the CNS and the retina. Not found in bodies.

Its subcellular location is the cytoplasm. The enzyme catalyses GTP = 3',5'-cyclic GMP + diphosphate. In terms of biological role, may have a role in phototransduction. Catalyzes the conversion of GTP to cGMP, a common second messenger that is utilized in a wide variety of cells and signal transduction pathways. A second subunit is required for enzyme activity. The chain is Head-specific guanylate cyclase (Gycalpha99B) from Drosophila melanogaster (Fruit fly).